Reading from the N-terminus, the 184-residue chain is Ribosome-recycling factor (184 aa).

This sequence belongs to the RRF family.

It localises to the cytoplasm. Its function is as follows. Responsible for the release of ribosomes from messenger RNA at the termination of protein biosynthesis. May increase the efficiency of translation by recycling ribosomes from one round of translation to another. The protein is Ribosome-recycling factor of Stenotrophomonas maltophilia (strain K279a).